Here is a 605-residue protein sequence, read N- to C-terminus: Adenine deaminase (605 aa).

The protein belongs to the metallo-dependent hydrolases superfamily. Adenine deaminase family. The cofactor is Mn(2+).

It carries out the reaction adenine + H2O + H(+) = hypoxanthine + NH4(+). The polypeptide is Adenine deaminase (Mesorhizobium japonicum (strain LMG 29417 / CECT 9101 / MAFF 303099) (Mesorhizobium loti (strain MAFF 303099))).